Reading from the N-terminus, the 710-residue chain is Polyribonucleotide nucleotidyltransferase (710 aa).

Residues aspartate 489 and aspartate 495 each contribute to the Mg(2+) site. Residues 556–615 (PKIDTIKIDVDKIKVVIGKGGETIDKIIAETGVKIDIDDEGNVSIYSSDQAAIDRTKEII) enclose the KH domain. Residues 625–693 (GEVYHAKVIR…EKGRVDASMK (69 aa)) form the S1 motif domain. Positions 691–710 (SMKALIPRPPKPEKKEEKHD) are disordered. Positions 700–710 (PKPEKKEEKHD) are enriched in basic and acidic residues.

It belongs to the polyribonucleotide nucleotidyltransferase family. Mg(2+) is required as a cofactor.

It is found in the cytoplasm. The enzyme catalyses RNA(n+1) + phosphate = RNA(n) + a ribonucleoside 5'-diphosphate. Its function is as follows. Involved in mRNA degradation. Catalyzes the phosphorolysis of single-stranded polyribonucleotides processively in the 3'- to 5'-direction. This Streptococcus pyogenes serotype M18 (strain MGAS8232) protein is Polyribonucleotide nucleotidyltransferase.